Consider the following 252-residue polypeptide: Ribosomal RNA large subunit methyltransferase E (252 aa).

Residues G48, W50, D68, D84, and D107 each coordinate S-adenosyl-L-methionine. The active-site Proton acceptor is K147. The region spanning 194 to 252 (PVREGDTLEVEIDNLGDEGDGVAKVDGYTLFVSGAEPGDAPEVRVTDVKPRFGFAETLE) is the TRAM domain.

Belongs to the class I-like SAM-binding methyltransferase superfamily. RNA methyltransferase RlmE family.

The protein localises to the cytoplasm. It catalyses the reaction uridine(2552) in 23S rRNA + S-adenosyl-L-methionine = 2'-O-methyluridine(2552) in 23S rRNA + S-adenosyl-L-homocysteine + H(+). Specifically methylates the uridine in position 2552 of 23S rRNA at the 2'-O position of the ribose in the fully assembled 50S ribosomal subunit. The polypeptide is Ribosomal RNA large subunit methyltransferase E (Natronomonas pharaonis (strain ATCC 35678 / DSM 2160 / CIP 103997 / JCM 8858 / NBRC 14720 / NCIMB 2260 / Gabara) (Halobacterium pharaonis)).